The following is a 205-amino-acid chain: MSAFITFEGPEGSGKTTVINEVYHRLVKDYDVIMTREPGGVPTGEEIRKIVLEGNDMDIRTEAMLFAASRREHLVLKVIPALKEGKVVLCDRYIDSSLAYQGYARGIGVEEVRALNEFAINGLYPDLTIYLNVSAEVGRERIIKNSRDQNRLDQEDLKFHEKVIEGYQEIIHNESQRFKSVNADQPLENVVEDTYQTIIKYLEKI.

An ATP-binding site is contributed by 9–16 (GPEGSGKT).

Belongs to the thymidylate kinase family.

It catalyses the reaction dTMP + ATP = dTDP + ADP. Functionally, phosphorylation of dTMP to form dTDP in both de novo and salvage pathways of dTTP synthesis. The chain is Thymidylate kinase from Staphylococcus aureus (strain NCTC 8325 / PS 47).